A 36-amino-acid polypeptide reads, in one-letter code: Pancreatic polypeptide (36 aa).

Tyrosine amide is present on Tyr36.

This sequence belongs to the NPY family.

It localises to the secreted. In terms of biological role, hormone secreted by pancreatic cells that acts as a regulator of pancreatic and gastrointestinal functions probably by signaling through the G protein-coupled receptor NPY4R2. The polypeptide is Pancreatic polypeptide (PPY) (Oryctolagus cuniculus (Rabbit)).